Here is a 149-residue protein sequence, read N- to C-terminus: Large ribosomal subunit protein bL9 (149 aa).

It belongs to the bacterial ribosomal protein bL9 family.

Functionally, binds to the 23S rRNA. The protein is Large ribosomal subunit protein bL9 of Anaeromyxobacter dehalogenans (strain 2CP-1 / ATCC BAA-258).